Consider the following 151-residue polypeptide: Large ribosomal subunit protein bL9 (151 aa).

The protein belongs to the bacterial ribosomal protein bL9 family.

In terms of biological role, binds to the 23S rRNA. The sequence is that of Large ribosomal subunit protein bL9 from Mycoplasmopsis agalactiae (strain NCTC 10123 / CIP 59.7 / PG2) (Mycoplasma agalactiae).